A 229-amino-acid polypeptide reads, in one-letter code: Germin-like protein subfamily 1 member 7 (229 aa).

An N-terminal signal peptide occupies residues 1-24 (MEGFLRFLVAKAILLALASSFVSC). Residues cysteine 34 and cysteine 50 are joined by a disulfide bond. The region spanning 64-215 (SGLNIAGNTI…AFQLDVNVVK (152 aa)) is the Cupin type-1 domain. A glycan (N-linked (GlcNAc...) asparagine) is linked at asparagine 79. The Mn(2+) site is built by histidine 112, histidine 114, glutamate 119, and histidine 161.

This sequence belongs to the germin family. Oligomer (believed to be a pentamer but probably hexamer).

The protein resides in the secreted. Its subcellular location is the extracellular space. The protein localises to the apoplast. In terms of biological role, may play a role in plant defense. Probably has no oxalate oxidase activity even if the active site is conserved. This is Germin-like protein subfamily 1 member 7 from Arabidopsis thaliana (Mouse-ear cress).